We begin with the raw amino-acid sequence, 234 residues long: Uridylate kinase (234 aa).

9 to 12 (KLSG) is an ATP binding site. Glycine 51 contacts UMP. Residues glycine 52 and arginine 56 each coordinate ATP. Residues aspartate 71 and 132–139 (CGNPFFTT) contribute to the UMP site. Residues threonine 159, tyrosine 165, and aspartate 168 each contribute to the ATP site.

This sequence belongs to the UMP kinase family. In terms of assembly, homohexamer.

The protein resides in the cytoplasm. It carries out the reaction UMP + ATP = UDP + ADP. The protein operates within pyrimidine metabolism; CTP biosynthesis via de novo pathway; UDP from UMP (UMPK route): step 1/1. Its activity is regulated as follows. Inhibited by UTP. Catalyzes the reversible phosphorylation of UMP to UDP. The protein is Uridylate kinase of Prochlorococcus marinus (strain AS9601).